The primary structure comprises 957 residues: Glycine dehydrogenase (decarboxylating) 2 (957 aa).

Lys-707 is subject to N6-(pyridoxal phosphate)lysine.

Belongs to the GcvP family. As to quaternary structure, the glycine cleavage system is composed of four proteins: P, T, L and H. Pyridoxal 5'-phosphate serves as cofactor.

The catalysed reaction is N(6)-[(R)-lipoyl]-L-lysyl-[glycine-cleavage complex H protein] + glycine + H(+) = N(6)-[(R)-S(8)-aminomethyldihydrolipoyl]-L-lysyl-[glycine-cleavage complex H protein] + CO2. The glycine cleavage system catalyzes the degradation of glycine. The P protein binds the alpha-amino group of glycine through its pyridoxal phosphate cofactor; CO(2) is released and the remaining methylamine moiety is then transferred to the lipoamide cofactor of the H protein. This Pseudomonas fluorescens (strain ATCC BAA-477 / NRRL B-23932 / Pf-5) protein is Glycine dehydrogenase (decarboxylating) 2.